A 438-amino-acid polypeptide reads, in one-letter code: MTVPVNATNLRIPLDTGRDREFLDSWAELEAIGATPAGGVERQAGTAEDGQMRDWLSRWLRTRGFSVEVDPIGNLFGLLEFNPGAPYVLVGSHLDSQPRGGRFDGAYGVLAGAVAADRTRRYVTRSGFTPRYNVAVVDWFNEEGSRFKPSMMGSAVFTGTLDLEEALNTTDDDGVSVRDALAAINGIGDREVFSSTGPRQLAAYAEIHIEQGRELEKNNVTIGLVDRTWAANKYELNVVGIQGHTGATAIEDRQDALLGAALIVVALRDIADEFGEELHTSCGQLTVLPNSPVVVPREVHMHLDLRSDNDELLAAADAALRRRIAEAEIRAGVKVEHRKAHVWPGHHYQPQGVELARDAANDLGISSMLVQTRAGHDSTNMKEIVPSVMLFVPSVEGISHAEAEYTSDEDLCSGVDLLTEVVARMLDGSLDAAGAGHP.

Residues aspartate 95, aspartate 104, glutamate 143, and histidine 208 each contribute to the Zn(2+) site. Lysine 217 participates in a covalent cross-link: Isoglutamyl lysine isopeptide (Lys-Gln) (interchain with Q-Cter in protein Pup). Histidine 400 is a binding site for Zn(2+).

The protein belongs to the peptidase M20 family. Requires Zn(2+) as cofactor.

This chain is Putative hydrolase MSMEG_3995/MSMEI_3903, found in Mycolicibacterium smegmatis (strain ATCC 700084 / mc(2)155) (Mycobacterium smegmatis).